Here is a 188-residue protein sequence, read N- to C-terminus: GTPase KRas (188 aa).

Residues G10–A18, V29–T35, A59–G60, and N116–D119 each bind GTP. The short motif at Y32–Y40 is the Effector region element. The interval E168–M188 is disordered. Residue C185 is modified to Cysteine methyl ester. Residue C185 is the site of S-farnesyl cysteine attachment. The propeptide at I186–M188 is removed in mature form.

Belongs to the small GTPase superfamily. Ras family.

Its subcellular location is the cell membrane. The protein localises to the cytoplasm. It carries out the reaction GTP + H2O = GDP + phosphate + H(+). Alternates between an inactive form bound to GDP and an active form bound to GTP. Activated by a guanine nucleotide-exchange factor (GEF) and inactivated by a GTPase-activating protein (GAP). Ras proteins bind GDP/GTP and possess intrinsic GTPase activity. Plays an important role in the regulation of cell proliferation. May play a role in promoting oncogenic events by inducing transcriptional silencing of tumor suppressor genes (TSGs). The chain is GTPase KRas (KRAS) from Meleagris gallopavo (Wild turkey).